Here is a 510-residue protein sequence, read N- to C-terminus: Probable cytosol aminopeptidase (510 aa).

Mn(2+)-binding residues include Lys282 and Asp287. Lys294 is a catalytic residue. Residues Asp305, Asp364, and Glu366 each contribute to the Mn(2+) site. Residue Arg368 is part of the active site.

This sequence belongs to the peptidase M17 family. Mn(2+) serves as cofactor.

It localises to the cytoplasm. It catalyses the reaction Release of an N-terminal amino acid, Xaa-|-Yaa-, in which Xaa is preferably Leu, but may be other amino acids including Pro although not Arg or Lys, and Yaa may be Pro. Amino acid amides and methyl esters are also readily hydrolyzed, but rates on arylamides are exceedingly low.. The enzyme catalyses Release of an N-terminal amino acid, preferentially leucine, but not glutamic or aspartic acids.. Functionally, presumably involved in the processing and regular turnover of intracellular proteins. Catalyzes the removal of unsubstituted N-terminal amino acids from various peptides. This Cupriavidus metallidurans (strain ATCC 43123 / DSM 2839 / NBRC 102507 / CH34) (Ralstonia metallidurans) protein is Probable cytosol aminopeptidase.